A 282-amino-acid polypeptide reads, in one-letter code: Hydroxyacylglutathione hydrolase-like protein (282 aa).

7 residues coordinate Zn(2+): H54, H56, D58, H59, H110, D134, and H173.

It belongs to the metallo-beta-lactamase superfamily. Glyoxalase II family. Zn(2+) is required as a cofactor.

Its function is as follows. Hydrolase acting on ester bonds. This Gallus gallus (Chicken) protein is Hydroxyacylglutathione hydrolase-like protein (HAGHL).